Reading from the N-terminus, the 216-residue chain is PEP-dependent dihydroxyacetone kinase 2, ADP-binding subunit DhaL (216 aa).

The 202-residue stretch at 9 to 210 (AFFGHVLQDM…SWMLMNVILE (202 aa)) folds into the DhaL domain. Mg(2+) is bound by residues aspartate 33, aspartate 38, and aspartate 40. ADP-binding positions include 41-44 (HGIN), 84-85 (AS), glycine 126, methionine 135, arginine 182, and 195-197 (DPG).

In terms of assembly, homodimer. The dihydroxyacetone kinase complex is composed of a homodimer of DhaM, a homodimer of DhaK and the subunit DhaL. Mg(2+) is required as a cofactor.

Its subcellular location is the cytoplasm. The enzyme catalyses dihydroxyacetone + phosphoenolpyruvate = dihydroxyacetone phosphate + pyruvate. Its pathway is polyol metabolism; glycerol degradation. Functionally, ADP-binding subunit of the dihydroxyacetone kinase, which is responsible for the phosphoenolpyruvate (PEP)-dependent phosphorylation of dihydroxyacetone. DhaL-ADP is converted to DhaL-ATP via a phosphoryl group transfer from DhaM and transmits it to dihydroxyacetone binds to DhaK. This chain is PEP-dependent dihydroxyacetone kinase 2, ADP-binding subunit DhaL, found in Listeria innocua serovar 6a (strain ATCC BAA-680 / CLIP 11262).